Reading from the N-terminus, the 223-residue chain is Endonuclease III (223 aa).

The HhH domain occupies 118 to 137 (RDFLTAIEGIGDKTADVVLL). Residues Cys198, Cys205, Cys208, and Cys214 each coordinate [4Fe-4S] cluster.

The protein belongs to the Nth/MutY family. It depends on [4Fe-4S] cluster as a cofactor.

It catalyses the reaction 2'-deoxyribonucleotide-(2'-deoxyribose 5'-phosphate)-2'-deoxyribonucleotide-DNA = a 3'-end 2'-deoxyribonucleotide-(2,3-dehydro-2,3-deoxyribose 5'-phosphate)-DNA + a 5'-end 5'-phospho-2'-deoxyribonucleoside-DNA + H(+). Probably part of a 4-gene DNA damage response locus in which the upstream ups system, in combination with this downstream locus, functions in homologous recombination to rescue Sulfolobales from DNA-damaging threats. DNA repair enzyme that has both DNA N-glycosylase activity and AP-lyase activity. The DNA N-glycosylase activity releases various damaged pyrimidines from DNA by cleaving the N-glycosidic bond, leaving an AP (apurinic/apyrimidinic) site. The AP-lyase activity cleaves the phosphodiester bond 3' to the AP site by a beta-elimination, leaving a 3'-terminal unsaturated sugar and a product with a terminal 5'-phosphate. Nicks UV-treated plasmid DNA in a dose-dependent manner, has no activity on untreated DNA. The protein is Endonuclease III of Sulfolobus acidocaldarius (strain ATCC 33909 / DSM 639 / JCM 8929 / NBRC 15157 / NCIMB 11770).